Reading from the N-terminus, the 532-residue chain is MPQLYIYIRLLGAYLFIISRVQGQNLDSMLHGTGMKSDSDQKKSENGVTLAPEDTLPFLKCYCSGHCPDDAINNTCITNGHCFAIIEEDDQGETTLASGCMKYEGSDFQCKDSPKAQLRRTIECCRTNLCNQYLQPTLPPVVIGPFFDGSIRWLVLLISMAVCIIAMIIFSSCFCYKHYCKSISSRRRYNRDLEQDEAFIPVGESLKDLIDQSQSSGSGSGLPLLVQRTIAKQIQMVRQVGKGRYGEVWMGKWRGEKVAVKVFFTTEEASWFRETEIYQTVLMRHENILGFIAADIKGTGSWTQLYLITDYHENGSLYDFLKCATLDTRALLKLAYSAACGLCHLHTEIYGTQGKPAIAHRDLKSKNILIKKNGSCCIADLGLAVKFNSDTNEVDVPLNTRVGTKRYMAPEVLDESLNKNHFQPYIMADIYSFGLIIWEMARRCITGGIVEEYQLPYYNMVPSDPSYEDMREVVCVKRLRPIVSNRWNSDECLRAVLKLMSECWAHNPASRLTALRIKKTLAKMVESQDVKI.

The signal sequence occupies residues 1-23; the sequence is MPQLYIYIRLLGAYLFIISRVQG. The Extracellular segment spans residues 24–152; it reads QNLDSMLHGT…IGPFFDGSIR (129 aa). Intrachain disulfides connect cysteine 61–cysteine 82, cysteine 63–cysteine 67, and cysteine 76–cysteine 100. The N-linked (GlcNAc...) asparagine glycan is linked to asparagine 73. The tract at residues 107–109 is mediates specificity for BMP ligand; that stretch reads DFQ. 2 disulfide bridges follow: cysteine 110/cysteine 124 and cysteine 125/cysteine 130. The helical transmembrane segment at 153-176 threads the bilayer; sequence WLVLLISMAVCIIAMIIFSSCFCY. At 177-532 the chain is on the cytoplasmic side; it reads KHYCKSISSR…KMVESQDVKI (356 aa). The 30-residue stretch at 204 to 233 folds into the GS domain; it reads ESLKDLIDQSQSSGSGSGLPLLVQRTIAKQ. A Protein kinase domain is found at 234 to 525; the sequence is IQMVRQVGKG…RIKKTLAKMV (292 aa). ATP-binding positions include 240–248 and lysine 261; that span reads VGKGRYGEV. The active-site Proton acceptor is the aspartate 362.

The protein belongs to the protein kinase superfamily. TKL Ser/Thr protein kinase family. TGFB receptor subfamily. Interacts with low affinity with GDF5; positively regulates chondrocyte differentiation. Interacts with BMP4. Interacts with SCUBE3. Interacts with TSC22D1/TSC-22. Interacts with BMP2; the interaction may induce HAMP expression. Interacts with BMP6. Interacts with heterodimers composed of BMP2 and BMP6 in vitro; the interaction may induce HAMP expression. Interacts with TGFBR3. Mg(2+) is required as a cofactor. The cofactor is Mn(2+). Glycosylated. Highly expressed in skeletal muscle.

It localises to the cell membrane. It is found in the cell surface. The catalysed reaction is L-threonyl-[receptor-protein] + ATP = O-phospho-L-threonyl-[receptor-protein] + ADP + H(+). It carries out the reaction L-seryl-[receptor-protein] + ATP = O-phospho-L-seryl-[receptor-protein] + ADP + H(+). On ligand binding, forms a receptor complex consisting of two type II and two type I transmembrane serine/threonine kinases. Type II receptors phosphorylate and activate type I receptors which autophosphorylate, then bind and activate SMAD transcriptional regulators. Receptor for BMP2, BMP4, GDF5 and GDF6. Positively regulates chondrocyte differentiation through GDF5 interaction. Mediates induction of adipogenesis by GDF6. May promote the expression of HAMP, potentially via its interaction with BMP2. The polypeptide is Bone morphogenetic protein receptor type-1A (BMPR1A) (Homo sapiens (Human)).